The primary structure comprises 40 residues: Photosystem I reaction center subunit IX (40 aa).

A helical transmembrane segment spans residues 12–34; the sequence is APVLLTAWMSLTAGMIIEIQRFF.

Belongs to the PsaJ family.

It localises to the plastid. The protein resides in the chloroplast thylakoid membrane. In terms of biological role, may help in the organization of the PsaE and PsaF subunits. The chain is Photosystem I reaction center subunit IX from Emiliania huxleyi (Coccolithophore).